A 1407-amino-acid polypeptide reads, in one-letter code: Probable phosphoribosylformylglycinamidine synthase, chloroplastic/mitochondrial (1407 aa).

A chloroplast and mitochondrion-targeting transit peptide spans 1–53; that stretch reads MNTSQATRAALFLNGSNRQAMLLQRSSMSQLWGSVRMRTSRLSLNRTKAVSLR. ATP contacts are provided by residues 407–418, 487–489, and alanine 786; these read GAETGAGGRIRD and QGY. Residues aspartate 787, glutamate 826, asparagine 830, and aspartate 989 each contribute to the Mg(2+) site. An ATP-binding site is contributed by serine 991. A Glutamine amidotransferase type-1 domain is found at 1141–1381; that stretch reads KVAVIREEGS…LMWQFPWYPT (241 aa). The active-site Nucleophile is the cysteine 1235. Catalysis depends on residues histidine 1366 and glutamate 1368.

It in the N-terminal section; belongs to the FGAMS family.

Its subcellular location is the plastid. It localises to the chloroplast. The protein localises to the mitochondrion. It carries out the reaction N(2)-formyl-N(1)-(5-phospho-beta-D-ribosyl)glycinamide + L-glutamine + ATP + H2O = 2-formamido-N(1)-(5-O-phospho-beta-D-ribosyl)acetamidine + L-glutamate + ADP + phosphate + H(+). The protein operates within purine metabolism; IMP biosynthesis via de novo pathway; 5-amino-1-(5-phospho-D-ribosyl)imidazole from N(2)-formyl-N(1)-(5-phospho-D-ribosyl)glycinamide: step 1/2. In terms of biological role, essential to the male gametophyte development. Phosphoribosylformylglycinamidine synthase involved in the purines biosynthetic pathway. Catalyzes the ATP-dependent conversion of formylglycinamide ribonucleotide (FGAR) and glutamine to yield formylglycinamidine ribonucleotide (FGAM) and glutamate. The polypeptide is Probable phosphoribosylformylglycinamidine synthase, chloroplastic/mitochondrial (Arabidopsis thaliana (Mouse-ear cress)).